Here is a 75-residue protein sequence, read N- to C-terminus: Protein SlyX homolog (75 aa).

It belongs to the SlyX family.

This is Protein SlyX homolog from Chromobacterium violaceum (strain ATCC 12472 / DSM 30191 / JCM 1249 / CCUG 213 / NBRC 12614 / NCIMB 9131 / NCTC 9757 / MK).